The primary structure comprises 274 residues: Undecaprenyl-diphosphatase (274 aa).

Helical transmembrane passes span 9 to 29 (LEYL…FIPV), 47 to 67 (PGAS…AWYF), 95 to 115 (ILIG…FVPY), 120 to 140 (VLRS…FMYL), 161 to 181 (LIGF…GITI), 197 to 217 (FSFL…FISS), 224 to 244 (LGFF…LLAI), and 254 to 274 (NGLK…LLNL).

It belongs to the UppP family.

Its subcellular location is the cell inner membrane. The enzyme catalyses di-trans,octa-cis-undecaprenyl diphosphate + H2O = di-trans,octa-cis-undecaprenyl phosphate + phosphate + H(+). In terms of biological role, catalyzes the dephosphorylation of undecaprenyl diphosphate (UPP). Confers resistance to bacitracin. This Prochlorococcus marinus (strain AS9601) protein is Undecaprenyl-diphosphatase.